The following is a 128-amino-acid chain: Large ribosomal subunit protein bL19 (128 aa).

The protein belongs to the bacterial ribosomal protein bL19 family.

In terms of biological role, this protein is located at the 30S-50S ribosomal subunit interface and may play a role in the structure and function of the aminoacyl-tRNA binding site. The protein is Large ribosomal subunit protein bL19 of Ralstonia nicotianae (strain ATCC BAA-1114 / GMI1000) (Ralstonia solanacearum).